The chain runs to 275 residues: 4-hydroxy-3-methylbut-2-enyl diphosphate reductase (275 aa).

[4Fe-4S] cluster is bound at residue C12. (2E)-4-hydroxy-3-methylbut-2-enyl diphosphate is bound by residues H40 and H70. H40 and H70 together coordinate dimethylallyl diphosphate. Isopentenyl diphosphate is bound by residues H40 and H70. C92 lines the [4Fe-4S] cluster pocket. H119 lines the (2E)-4-hydroxy-3-methylbut-2-enyl diphosphate pocket. Residue H119 coordinates dimethylallyl diphosphate. An isopentenyl diphosphate-binding site is contributed by H119. The active-site Proton donor is E121. Residue T151 participates in (2E)-4-hydroxy-3-methylbut-2-enyl diphosphate binding. Residue C181 participates in [4Fe-4S] cluster binding. The (2E)-4-hydroxy-3-methylbut-2-enyl diphosphate site is built by S209, S210, N211, and S251. Positions 209, 210, 211, and 251 each coordinate dimethylallyl diphosphate. The isopentenyl diphosphate site is built by S209, S210, N211, and S251.

It belongs to the IspH family. Requires [4Fe-4S] cluster as cofactor.

It catalyses the reaction isopentenyl diphosphate + 2 oxidized [2Fe-2S]-[ferredoxin] + H2O = (2E)-4-hydroxy-3-methylbut-2-enyl diphosphate + 2 reduced [2Fe-2S]-[ferredoxin] + 2 H(+). The enzyme catalyses dimethylallyl diphosphate + 2 oxidized [2Fe-2S]-[ferredoxin] + H2O = (2E)-4-hydroxy-3-methylbut-2-enyl diphosphate + 2 reduced [2Fe-2S]-[ferredoxin] + 2 H(+). It functions in the pathway isoprenoid biosynthesis; dimethylallyl diphosphate biosynthesis; dimethylallyl diphosphate from (2E)-4-hydroxy-3-methylbutenyl diphosphate: step 1/1. Its pathway is isoprenoid biosynthesis; isopentenyl diphosphate biosynthesis via DXP pathway; isopentenyl diphosphate from 1-deoxy-D-xylulose 5-phosphate: step 6/6. Functionally, catalyzes the conversion of 1-hydroxy-2-methyl-2-(E)-butenyl 4-diphosphate (HMBPP) into a mixture of isopentenyl diphosphate (IPP) and dimethylallyl diphosphate (DMAPP). Acts in the terminal step of the DOXP/MEP pathway for isoprenoid precursor biosynthesis. This is 4-hydroxy-3-methylbut-2-enyl diphosphate reductase from Thermotoga sp. (strain RQ2).